A 1404-amino-acid chain; its full sequence is DNA-directed RNA polymerase subunit beta' (1404 aa).

Residues Cys70, Cys72, Cys85, and Cys88 each coordinate Zn(2+). 3 residues coordinate Mg(2+): Asp458, Asp460, and Asp462. The Zn(2+) site is built by Cys813, Cys887, Cys894, and Cys897. Residues 1377 to 1404 (ERRAIAESEAAELEASQAETSDENAAAE) are disordered.

Belongs to the RNA polymerase beta' chain family. The RNAP catalytic core consists of 2 alpha, 1 beta, 1 beta' and 1 omega subunit. When a sigma factor is associated with the core the holoenzyme is formed, which can initiate transcription. Requires Mg(2+) as cofactor. The cofactor is Zn(2+).

The enzyme catalyses RNA(n) + a ribonucleoside 5'-triphosphate = RNA(n+1) + diphosphate. Its function is as follows. DNA-dependent RNA polymerase catalyzes the transcription of DNA into RNA using the four ribonucleoside triphosphates as substrates. This is DNA-directed RNA polymerase subunit beta' from Polaromonas naphthalenivorans (strain CJ2).